Consider the following 467-residue polypeptide: Cysteine--tRNA ligase (467 aa).

Cys29 serves as a coordination point for Zn(2+). The 'HIGH' region motif lies at 31-41 (PTVYNYVHIGN). Zn(2+) contacts are provided by Cys209, His234, and Glu238. Residues 267–271 (KMSKS) carry the 'KMSKS' region motif. An ATP-binding site is contributed by Lys270.

Belongs to the class-I aminoacyl-tRNA synthetase family. Monomer. Zn(2+) is required as a cofactor.

The protein resides in the cytoplasm. It catalyses the reaction tRNA(Cys) + L-cysteine + ATP = L-cysteinyl-tRNA(Cys) + AMP + diphosphate. This is Cysteine--tRNA ligase from Xylella fastidiosa (strain Temecula1 / ATCC 700964).